The sequence spans 315 residues: Methionyl-tRNA formyltransferase (315 aa).

113–116 (SILP) contributes to the (6S)-5,6,7,8-tetrahydrofolate binding site.

Belongs to the Fmt family.

It catalyses the reaction L-methionyl-tRNA(fMet) + (6R)-10-formyltetrahydrofolate = N-formyl-L-methionyl-tRNA(fMet) + (6S)-5,6,7,8-tetrahydrofolate + H(+). In terms of biological role, attaches a formyl group to the free amino group of methionyl-tRNA(fMet). The formyl group appears to play a dual role in the initiator identity of N-formylmethionyl-tRNA by promoting its recognition by IF2 and preventing the misappropriation of this tRNA by the elongation apparatus. The protein is Methionyl-tRNA formyltransferase of Aliivibrio fischeri (strain MJ11) (Vibrio fischeri).